The primary structure comprises 150 residues: Suppressor of HU sensitivity involved in recombination protein 1 (150 aa).

In terms of assembly, component of the SHU complex composed of at least CSM2, PSY3, SHU1 and SHU2.

It localises to the nucleus. Its function is as follows. Plays a role in a RAD51/RAD54-dependent homologous recombination repair (HRR) pathway to repair MMS-induced lesions during S-phase. The polypeptide is Suppressor of HU sensitivity involved in recombination protein 1 (SHU1) (Saccharomyces cerevisiae (strain ATCC 204508 / S288c) (Baker's yeast)).